Consider the following 397-residue polypeptide: Putative galactokinase (397 aa).

S78 contributes to the ATP binding site. Catalysis depends on D182, which acts as the Proton acceptor.

This sequence belongs to the GHMP kinase family. GalK subfamily.

The protein resides in the cytoplasm. It carries out the reaction alpha-D-galactose + ATP = alpha-D-galactose 1-phosphate + ADP + H(+). It functions in the pathway carbohydrate metabolism; galactose metabolism. Its function is as follows. Catalyzes the transfer of the gamma-phosphate of ATP to D-galactose to form alpha-D-galactose-1-phosphate (Gal-1-P). In Treponema pallidum (strain Nichols), this protein is Putative galactokinase (galK).